We begin with the raw amino-acid sequence, 642 residues long: Ribosome biogenesis protein BOP1 homolog (642 aa).

A disordered region spans residues 1 to 28 (MIHKRMNSTELERTSKKIDDYDSSDEED). Basic and acidic residues predominate over residues 10 to 20 (ELERTSKKIDD). WD repeat units follow at residues 311–351 (GHSG…CLKT), 353–393 (SLDG…DRHR), 472–510 (RLKGLMTVLSFHPSEPFLFVGTQRYIRIYDLAKCQLKKK), 513–552 (TGSQWMSCMHVDFRGDNVFVGGHDRVFSWIDLQLSSKPWK), 556–595 (HHTAAIRGVTQHARCPLIATVSDDSTAIVYYARISSDSLK), and 612–642 (KNGLSILAAIFHPSQPWLITAHVDGSIALFT).

Belongs to the WD repeat BOP1/ERB1 family.

Its subcellular location is the nucleus. It localises to the nucleolus. It is found in the nucleoplasm. Required for maturation of ribosomal RNAs and formation of the large ribosomal subunit. In Brugia malayi (Filarial nematode worm), this protein is Ribosome biogenesis protein BOP1 homolog.